A 251-amino-acid chain; its full sequence is Flap endonuclease Xni (251 aa).

Aspartate 104 is a binding site for Mg(2+). A 5'-3' exonuclease domain is found at valine 160–leucine 249. 5 residues coordinate K(+): leucine 171, alanine 172, proline 180, valine 182, and isoleucine 185. The tract at residues glycine 184–serine 189 is interaction with DNA.

It belongs to the Xni family. Mg(2+) serves as cofactor. It depends on K(+) as a cofactor.

Its function is as follows. Has flap endonuclease activity. During DNA replication, flap endonucleases cleave the 5'-overhanging flap structure that is generated by displacement synthesis when DNA polymerase encounters the 5'-end of a downstream Okazaki fragment. The chain is Flap endonuclease Xni from Citrobacter koseri (strain ATCC BAA-895 / CDC 4225-83 / SGSC4696).